The following is a 555-amino-acid chain: 2-succinyl-5-enolpyruvyl-6-hydroxy-3-cyclohexene-1-carboxylate synthase (555 aa).

It belongs to the TPP enzyme family. MenD subfamily. Homodimer. The cofactor is Mg(2+). Mn(2+) is required as a cofactor. It depends on thiamine diphosphate as a cofactor.

The catalysed reaction is isochorismate + 2-oxoglutarate + H(+) = 5-enolpyruvoyl-6-hydroxy-2-succinyl-cyclohex-3-ene-1-carboxylate + CO2. The protein operates within quinol/quinone metabolism; 1,4-dihydroxy-2-naphthoate biosynthesis; 1,4-dihydroxy-2-naphthoate from chorismate: step 2/7. Its pathway is quinol/quinone metabolism; menaquinone biosynthesis. Its function is as follows. Catalyzes the thiamine diphosphate-dependent decarboxylation of 2-oxoglutarate and the subsequent addition of the resulting succinic semialdehyde-thiamine pyrophosphate anion to isochorismate to yield 2-succinyl-5-enolpyruvyl-6-hydroxy-3-cyclohexene-1-carboxylate (SEPHCHC). This chain is 2-succinyl-5-enolpyruvyl-6-hydroxy-3-cyclohexene-1-carboxylate synthase, found in Kineococcus radiotolerans (strain ATCC BAA-149 / DSM 14245 / SRS30216).